Here is an 800-residue protein sequence, read N- to C-terminus: Cell division cycle 5-like protein (800 aa).

2 consecutive HTH myb-type domains span residues 1–56 (MRNV…DPSI) and 57–106 (KKTE…DEVQ). 2 DNA-binding regions (H-T-H motif) span residues 29-52 (WARI…HEWL) and 80-102 (WKTI…NRLL). 4 disordered regions span residues 109 to 186 (QDNE…KRKF), 334 to 378 (YEKL…NIRT), 399 to 445 (QTPL…KQSL), and 571 to 610 (NKTF…NDND). Positions 113 to 122 (NGGGSGGGGT) are enriched in gly residues. A compositionally biased stretch (basic and acidic residues) spans 133–142 (NDPRRLRMGD). The segment covering 340-351 (SGSGGGSGGVGV) has biased composition (gly residues). Low complexity predominate over residues 361 to 376 (TASISSTAANNNTNNI). Composition is skewed to polar residues over residues 409 to 445 (NVSQ…KQSL) and 573 to 584 (TFPNDSITPSST). Over residues 592–601 (DNHHHHHDDI) the composition is skewed to basic and acidic residues. 2 coiled-coil regions span residues 621–700 (NTEL…KIKN) and 748–800 (VALK…LSIF).

Belongs to the CEF1 family. In terms of assembly, component of the precatalytic, catalytic and postcatalytic spliceosome complexes.

Its subcellular location is the nucleus. It localises to the cytoplasm. Its function is as follows. DNA-binding protein involved in cell cycle control. May act as a transcription activator. Plays a role in pre-mRNA splicing as core component of precatalytic, catalytic and postcatalytic spliceosomal complexes. May also play a role in the response to DNA damage (DDR). This Dictyostelium discoideum (Social amoeba) protein is Cell division cycle 5-like protein (cdc5l).